The sequence spans 135 residues: Methylglyoxal synthase (135 aa).

An MGS-like domain is found at 1-135; that stretch reads MPKRRRIALI…AQPDPKEIHA (135 aa). Substrate is bound by residues His-12, Lys-16, 38 to 41, and 58 to 59; these read TGTT and SG. Asp-64 serves as the catalytic Proton donor/acceptor. Residue His-91 coordinates substrate.

This sequence belongs to the methylglyoxal synthase family.

The enzyme catalyses dihydroxyacetone phosphate = methylglyoxal + phosphate. Functionally, catalyzes the formation of methylglyoxal from dihydroxyacetone phosphate. The protein is Methylglyoxal synthase of Ralstonia nicotianae (strain ATCC BAA-1114 / GMI1000) (Ralstonia solanacearum).